We begin with the raw amino-acid sequence, 129 residues long: L-ectoine synthase (129 aa).

Belongs to the ectoine synthase family.

It carries out the reaction (2S)-4-acetamido-2-aminobutanoate = L-ectoine + H2O. It participates in amine and polyamine biosynthesis; ectoine biosynthesis; L-ectoine from L-aspartate 4-semialdehyde: step 3/3. In terms of biological role, catalyzes the circularization of gamma-N-acetyl-alpha,gamma-diaminobutyric acid (ADABA) to ectoine (1,4,5,6-tetrahydro-2-methyl-4-pyrimidine carboxylic acid), which is an excellent osmoprotectant. The chain is L-ectoine synthase from Desulfosudis oleivorans (strain DSM 6200 / JCM 39069 / Hxd3) (Desulfococcus oleovorans).